The sequence spans 427 residues: MTVSFEKTSDTKGTLSFSIDQETIKTGLDKAFNKVKANISVPGFRKGKISRQMFNKMYGEEALFEEALNAVLPTAYDAAVKEAAIEPVAQPKIDVAKMEKGSDWELTAEVVVKPTITLGDYKDLTVEVDATKEVTDEEVETRLTNAQNNLAELAVKETAAENGDTVVIDFVGSVDGVEFEGGKGSNHSLELGSGQFIPGFEEQLIGTKAGETVEVKVTFPENYQAEDLAGKEALFVTTVNEVKAKELPELDDELAKDIDEEVETLEELKAKFRKELEESKSEAYDDAVETAAIEAAVANAEIKEIPEEMIHEEVHRAMNEFLGGMQQQGISPEMYFQITGTSEDDLHKQYEADADKRVRTNLVIEAIAAAESFTTSDEEVKAEIEDLAGQYNMPVEQVEKLLPVDMLKHDIAMKKAVEVIATTAKVK.

Positions 163–248 (GDTVVIDFVG…VNEVKAKELP (86 aa)) constitute a PPIase FKBP-type domain.

It belongs to the FKBP-type PPIase family. Tig subfamily.

The protein localises to the cytoplasm. The enzyme catalyses [protein]-peptidylproline (omega=180) = [protein]-peptidylproline (omega=0). Its function is as follows. Involved in protein export. Acts as a chaperone by maintaining the newly synthesized protein in an open conformation. Functions as a peptidyl-prolyl cis-trans isomerase. The sequence is that of Trigger factor from Lactococcus lactis subsp. cremoris (strain MG1363).